Reading from the N-terminus, the 50-residue chain is Nosiheptide precursor (50 aa).

A cross-link (thiazole-4-carboxylic acid (Ser-Cys)) is located at residues 38 to 39; it reads SC. The segment at residues 38–46 is a cross-link (3-hydroxypyridine-2,5-dicarboxylic acid (Ser-Cys) (with S-47)); the sequence is SCTTCECCC. Positions 38–47 form a cross-link, 3-hydroxypyridine-2,5-dicarboxylic acid (Ser-Ser) (with C-46); that stretch reads SCTTCECCCS. Residues 41 to 42 constitute a cross-link (thiazole-4-carboxylic acid (Thr-Cys)); that stretch reads TC. Glu43 bears the 4-hydroxyglutamate mark. The segment at residues 43-44 is a cross-link (thiazole-4-carboxylic acid (Glu-Cys)); it reads EC. A cross-link (2-(cystein-S-ylcarbonyl)-3-methyl-4-(glutam-5-yloxy)methylindole (Glu-Cys)) is located at residues 43-45; it reads ECC. Positions 45–46 form a cross-link, thiazole-4-carboxylic acid (Cys-Cys); sequence CC. Positions 47–48 form a cross-link, thiazole-4-carboxylic acid (Ser-Cys); it reads SC. Ser49 is modified (2,3-didehydroalanine (Ser)). The residue at position 49 (Ser49) is a Serine amide; atypical.

Belongs to the thiocillin family. Post-translationally, the amidation of Ser-49 is produced by the oxidative cleavage of Ser-50 rather than of a glycine, as in eukaryotes.

Functionally, inhibits bacterial protein biosynthesis by binding to ribosomes. Specifically, binds to the complex of 23S rRNA and ribosomal protein L11 (RPLK) in the 50S ribosomal subunit. While allowing a weak binding of elongation factor G (EF-G) to the ribosome and subsequent GTP-hydrolysis, probably impairs conformational changes in both the ribosome and EF-G which are necessary for translocation. In vitro, inhibits Gram-positive bacteria S.aureus strain 209P (MIC=0.0009 ug/ml), S.aureus strain 133 (MIC=0.0019 ug/ml), S.aureus strain B3 (MIC=0.003 ug/ml), S.aureus strain Hb (MIC=0.003 ug/ml), M.citreus strain ATCC 8411 (MIC=0.0038 ug/ml), M.lysodeikticus strain ATCC 4698 (MIC=0.003 ug/ml), S.lutea strain ATCC 9341 (MIC=0.0011 ug/ml), S.faecalis strain ATCC 9790 (MIC=0.0007 ug/ml), S.viridans (MIC=0.0065 ug/ml), S.pyogenes hemolyticus strain Dig7 (MIC=0.00028 ug/ml), D.pneumoniae strain Til (MIC=0.00015 ug/ml), N.catrrhalis (MIC=0.0017 ug/ml), L.casei strain ATCC 6633 (MIC=0.003 ug/ml), B.cereus strain ATCC 6630 (MIC=0.0071 ug/ml) and various isolates of L.monocytogenes. In vitro, inhibits Gram-negative bacterium P.multocida strain A125 (MIC=0.0024 ug/ml) but not M.smegmatis strain ATCC 6630, S.typhimurium, A.aerogenes strain ATCC 8308, P.vulgaris, K.pneumoniae strain ATCC 10031, S.marcescens strain A476, P.aeruginosa strain Bass or B.bronchiseptica strain CN387. Does not inhibit Gram-negative bacterium E.coli strain ATCC 9637 but does inhibit purified ribosomes from E.coli. In vivo, has no systemic effect in mice infected with staphylococci or streptococci when applied orally or subcutaneously. Has a local effect in mice infected subcutaneously or intraperitoneally with staphylococci when applied immediately afterwards. Is not toxic to mice. The chain is Nosiheptide precursor from Streptomyces actuosus.